The sequence spans 397 residues: Polyphosphatase (397 aa).

The Mg(2+) site is built by aspartate 41, aspartate 127, and histidine 148. Residues aspartate 41, aspartate 127, and histidine 148 each contribute to the Mn(2+) site. Residues histidine 149, serine 286, and arginine 381 each coordinate ATP.

It belongs to the PPase class C family. Mn(2+) is required as a cofactor. It depends on Mg(2+) as a cofactor.

It catalyses the reaction [phosphate](n) + H2O = [phosphate](n-1) + phosphate + H(+). Its function is as follows. Polyphosphatase (polyPase) involved in the degradation of inorganic polyphosphates (polyP) that is able to degrade a range of chains from three to several hundreds of residues in a highly processive manner. Exclusively shows exopolyphosphatase activity, cleaving inside the polyP chain. This Saccharomyces cerevisiae (strain ATCC 204508 / S288c) (Baker's yeast) protein is Polyphosphatase.